A 362-amino-acid polypeptide reads, in one-letter code: Chalcone synthase A (362 aa).

Residue Cys-168 is part of the active site.

The protein belongs to the thiolase-like superfamily. Chalcone/stilbene synthases family.

The enzyme catalyses (E)-4-coumaroyl-CoA + 3 malonyl-CoA + 3 H(+) = 2',4,4',6'-tetrahydroxychalcone + 3 CO2 + 4 CoA. It participates in secondary metabolite biosynthesis; flavonoid biosynthesis. Its function is as follows. The primary product of this enzyme is 4,2',4',6'-tetrahydroxychalcone (also termed naringenin-chalcone or chalcone) which can under specific conditions spontaneously isomerize into naringenin. The chain is Chalcone synthase A (CHSA) from Ipomoea trifida (Morning glory).